Consider the following 105-residue polypeptide: Large ribosomal subunit protein bL21 (105 aa).

This sequence belongs to the bacterial ribosomal protein bL21 family. In terms of assembly, part of the 50S ribosomal subunit. Contacts protein L20.

In terms of biological role, this protein binds to 23S rRNA in the presence of protein L20. The protein is Large ribosomal subunit protein bL21 of Rickettsia africae (strain ESF-5).